The primary structure comprises 149 residues: Transcriptional repressor NrdR (149 aa).

A zinc finger lies at 3-34; that stretch reads CPFCSAVDTKVIDSRLVGEGTQVRRRRQCVIC. The ATP-cone domain maps to 49 to 139; that stretch reads PRVIKSNDVR…VYRSFEDIRE (91 aa).

It belongs to the NrdR family. It depends on Zn(2+) as a cofactor.

In terms of biological role, negatively regulates transcription of bacterial ribonucleotide reductase nrd genes and operons by binding to NrdR-boxes. This chain is Transcriptional repressor NrdR, found in Sodalis glossinidius (strain morsitans).